The chain runs to 200 residues: A-type ATP synthase subunit E (200 aa).

This sequence belongs to the V-ATPase E subunit family. As to quaternary structure, has multiple subunits with at least A(3), B(3), C, D, E, F, H, I and proteolipid K(x).

It localises to the cell membrane. Functionally, component of the A-type ATP synthase that produces ATP from ADP in the presence of a proton gradient across the membrane. The polypeptide is A-type ATP synthase subunit E (Aeropyrum pernix (strain ATCC 700893 / DSM 11879 / JCM 9820 / NBRC 100138 / K1)).